Here is a 264-residue protein sequence, read N- to C-terminus: Hydroxyethylthiazole kinase (264 aa).

Met-52 lines the substrate pocket. Residues Arg-127 and Thr-173 each coordinate ATP. Gly-200 is a binding site for substrate.

It belongs to the Thz kinase family. Mg(2+) serves as cofactor.

The catalysed reaction is 5-(2-hydroxyethyl)-4-methylthiazole + ATP = 4-methyl-5-(2-phosphooxyethyl)-thiazole + ADP + H(+). It participates in cofactor biosynthesis; thiamine diphosphate biosynthesis; 4-methyl-5-(2-phosphoethyl)-thiazole from 5-(2-hydroxyethyl)-4-methylthiazole: step 1/1. In terms of biological role, catalyzes the phosphorylation of the hydroxyl group of 4-methyl-5-beta-hydroxyethylthiazole (THZ). This Pectobacterium atrosepticum (strain SCRI 1043 / ATCC BAA-672) (Erwinia carotovora subsp. atroseptica) protein is Hydroxyethylthiazole kinase.